Consider the following 135-residue polypeptide: Thyrostimulin beta-5 subunit (135 aa).

The signal sequence occupies residues 1-19 (MVMPLVLSLALTPPPLCHA). 5 disulfides stabilise this stretch: Cys30–Cys87, Cys54–Cys102, Cys63–Cys118, Cys67–Cys120, and Cys123–Cys130.

It belongs to the glycoprotein hormones subunit beta family. Heterodimer with GPHA2; non-covalently-linked. In terms of tissue distribution, expressed by the venom duct.

The protein localises to the secreted. This Conus victoriae (Queen Victoria cone) protein is Thyrostimulin beta-5 subunit.